The chain runs to 461 residues: Bifunctional protein GlmU (461 aa).

Positions 1 to 232 (MNLQIIILAA…SFEVQGINNR (232 aa)) are pyrophosphorylase. UDP-N-acetyl-alpha-D-glucosamine contacts are provided by residues 8–11 (LAAG), K22, Q73, and 78–79 (GT). Mg(2+) is bound at residue D102. The UDP-N-acetyl-alpha-D-glucosamine site is built by G142, E157, and N230. N230 contributes to the Mg(2+) binding site. Positions 233–253 (QQLQQLERTWQQRAANQLMEK) are linker. Residues 254 to 461 (GATLADANRF…WKRPVKRERD (208 aa)) are N-acetyltransferase. Residues R336 and K354 each contribute to the UDP-N-acetyl-alpha-D-glucosamine site. The active-site Proton acceptor is the H366. Residues Y369 and N380 each coordinate UDP-N-acetyl-alpha-D-glucosamine. Acetyl-CoA-binding positions include A383, 389 to 390 (NY), S408, and A426.

It in the N-terminal section; belongs to the N-acetylglucosamine-1-phosphate uridyltransferase family. The protein in the C-terminal section; belongs to the transferase hexapeptide repeat family. Homotrimer. Mg(2+) is required as a cofactor.

It is found in the cytoplasm. The catalysed reaction is alpha-D-glucosamine 1-phosphate + acetyl-CoA = N-acetyl-alpha-D-glucosamine 1-phosphate + CoA + H(+). It catalyses the reaction N-acetyl-alpha-D-glucosamine 1-phosphate + UTP + H(+) = UDP-N-acetyl-alpha-D-glucosamine + diphosphate. It participates in nucleotide-sugar biosynthesis; UDP-N-acetyl-alpha-D-glucosamine biosynthesis; N-acetyl-alpha-D-glucosamine 1-phosphate from alpha-D-glucosamine 6-phosphate (route II): step 2/2. It functions in the pathway nucleotide-sugar biosynthesis; UDP-N-acetyl-alpha-D-glucosamine biosynthesis; UDP-N-acetyl-alpha-D-glucosamine from N-acetyl-alpha-D-glucosamine 1-phosphate: step 1/1. Its pathway is bacterial outer membrane biogenesis; LPS lipid A biosynthesis. Catalyzes the last two sequential reactions in the de novo biosynthetic pathway for UDP-N-acetylglucosamine (UDP-GlcNAc). The C-terminal domain catalyzes the transfer of acetyl group from acetyl coenzyme A to glucosamine-1-phosphate (GlcN-1-P) to produce N-acetylglucosamine-1-phosphate (GlcNAc-1-P), which is converted into UDP-GlcNAc by the transfer of uridine 5-monophosphate (from uridine 5-triphosphate), a reaction catalyzed by the N-terminal domain. This chain is Bifunctional protein GlmU, found in Legionella pneumophila (strain Paris).